Consider the following 454-residue polypeptide: MSFVPGQENAGSRSSSGSRSGNGILKKTTWADQTERAGNNGNRGRRNQPKQTATTQPNSGSVVPHYSWFSGITQFQKGKEFQFADGQGVPIANGIPATEQKGYWYRHNRRSFKTPDGQQKQLLPRWYFYYLGTGPHAGAIYGDSIEGVFWVANSQADTNTRADIVERDPSSHEAIPTRFAPGTVLPQGFYVEGSGRSAPASRSGSRSQSRGPSNRARSSSNQRQPASTVKPDMAEEIAALVLAKLGKDAGQPKQVTKQSAKEVRQKILNKPRQKRTPNKQCPVQQCFGKRGPNQNFGGSEMLKLGTSDPQFPILAELAPTPGAFFFGSKLELVKKNSGGADEPTKDVYELQYSGAIRFDSTLPGFETIMKVLNENLNAYQKEAGGVDVVSPKPQRKGRRQAQEKKDEVDNVSVAKPKSSVQRNVSRELTPEDRSLLAQILDDGVVPDGLDDSNA.

The interval 1 to 62 (MSFVPGQENA…ATTQPNSGSV (62 aa)) is disordered. Residues 11–21 (GSRSSSGSRSG) show a composition bias toward low complexity. Positions 49-61 (PKQTATTQPNSGS) are enriched in polar residues. An RNA-binding region spans residues 56 to 197 (QPNSGSVVPH…GFYVEGSGRS (142 aa)). A CoV N NTD domain is found at 64–193 (PHYSWFSGIT…VLPQGFYVEG (130 aa)). Residues Arg109, Arg125, and Arg167 each contribute to the RNA site. Residue Ser170 is modified to Phosphoserine; by host. Phosphothreonine; by host is present on Thr177. Disordered stretches follow at residues 186-230 (PQGF…STVK), 271-292 (PRQKRTPNKQCPVQQCFGKRGP), and 385-428 (GVDV…SREL). The segment covering 193–227 (GSGRSAPASRSGSRSQSRGPSNRARSSSNQRQPAS) has biased composition (low complexity). Ser194 is subject to Phosphoserine; by host. Residues 260–383 (AKEVRQKILN…ENLNAYQKEA (124 aa)) form the CoV N CTD domain. The interval 267 to 384 (ILNKPRQKRT…NLNAYQKEAG (118 aa)) is dimerization. Phosphoserine; by host is present on residues Ser390 and Ser425. Thr429 carries the phosphothreonine; by host modification.

Belongs to the betacoronavirus nucleocapsid protein family. Homooligomer. Both monomeric and oligomeric forms interact with RNA. Interacts with protein M. Interacts with NSP3; this interaction serves to tether the genome to the newly translated replicase-transcriptase complex at a very early stage of infection. Post-translationally, ADP-ribosylated. The ADP-ribosylation is retained in the virion during infection. In terms of processing, phosphorylated on serine and threonine residues.

The protein resides in the virion. Its subcellular location is the host endoplasmic reticulum-Golgi intermediate compartment. It is found in the host Golgi apparatus. Its function is as follows. Packages the positive strand viral genome RNA into a helical ribonucleocapsid (RNP) and plays a fundamental role during virion assembly through its interactions with the viral genome and membrane protein M. Plays an important role in enhancing the efficiency of subgenomic viral RNA transcription as well as viral replication. In Rat coronavirus (strain NJ) (RCV-NJ), this protein is Nucleoprotein.